A 439-amino-acid polypeptide reads, in one-letter code: O-methyltransferase aurJ (439 aa).

Asp-283 is a binding site for S-adenosyl-L-methionine. The active-site Proton acceptor is His-338.

This sequence belongs to the class I-like SAM-binding methyltransferase superfamily. Cation-independent O-methyltransferase family. COMT subfamily.

The catalysed reaction is norrubrofusarin + S-adenosyl-L-methionine = rubrofusarin + S-adenosyl-L-homocysteine + H(+). The protein operates within pigment biosynthesis. O-methyltransferase; part of the gene cluster that mediates the biosynthesis of aurofusarin, a red mycelium pigment which is acting as a mycotoxin. The first step is performed by the polyketide synthase which condenses one acetyl-CoA and 6 malonyl-CoA units to form the first intermediate, the cyclic heptaketide and yellow pigment YWA1. The C2 hydroxyl group in the pyrone ring of YWA1 is probably formed during ring closure by an aldol-type cyclization reaction. The dehydratase aurZ then acts as the first tailoring enzyme in the aurofusarin biosynthetic pathway by converting YWA1 to nor-rubrofusarin. Nor-rubrofusarin is then methylated to rubrofusarin by the O-methyltransferase aurJ. Rubrofusarin is then transported across the plasma membrane by the rubrofusarin-specific pump aurT for further enzymatic processing by the extracellular complex composed of GIP1, aurF, aurO and aurS to yield aurofusarin. The protein is O-methyltransferase aurJ of Gibberella zeae (strain ATCC MYA-4620 / CBS 123657 / FGSC 9075 / NRRL 31084 / PH-1) (Wheat head blight fungus).